A 155-amino-acid polypeptide reads, in one-letter code: Ribosomal RNA large subunit methyltransferase H (155 aa).

Residues Leu-72, Gly-103, and Leu-122–Leu-127 each bind S-adenosyl-L-methionine.

This sequence belongs to the RNA methyltransferase RlmH family. As to quaternary structure, homodimer.

It localises to the cytoplasm. The enzyme catalyses pseudouridine(1915) in 23S rRNA + S-adenosyl-L-methionine = N(3)-methylpseudouridine(1915) in 23S rRNA + S-adenosyl-L-homocysteine + H(+). Its function is as follows. Specifically methylates the pseudouridine at position 1915 (m3Psi1915) in 23S rRNA. The chain is Ribosomal RNA large subunit methyltransferase H from Histophilus somni (strain 2336) (Haemophilus somnus).